A 398-amino-acid polypeptide reads, in one-letter code: Phosphoglycerate kinase (398 aa).

Substrate contacts are provided by residues 23–25 (DFN), Arg-38, 61–64 (HLGK), Arg-122, and Arg-155. Residues Lys-206, Gly-297, Glu-328, and 354–357 (GGDS) contribute to the ATP site.

It belongs to the phosphoglycerate kinase family. As to quaternary structure, monomer.

It is found in the cytoplasm. The catalysed reaction is (2R)-3-phosphoglycerate + ATP = (2R)-3-phospho-glyceroyl phosphate + ADP. The protein operates within carbohydrate degradation; glycolysis; pyruvate from D-glyceraldehyde 3-phosphate: step 2/5. In Clostridium kluyveri (strain NBRC 12016), this protein is Phosphoglycerate kinase.